A 550-amino-acid polypeptide reads, in one-letter code: Arginine--tRNA ligase (550 aa).

Positions 130-140 match the 'HIGH' region motif; sequence ANPTGPIHLGG.

The protein belongs to the class-I aminoacyl-tRNA synthetase family. As to quaternary structure, monomer.

The protein localises to the cytoplasm. It catalyses the reaction tRNA(Arg) + L-arginine + ATP = L-arginyl-tRNA(Arg) + AMP + diphosphate. The polypeptide is Arginine--tRNA ligase (Rhodococcus opacus (strain B4)).